Here is a 284-residue protein sequence, read N- to C-terminus: RNase adapter protein RapZ (284 aa).

Position 8–15 (8–15) interacts with ATP; it reads GRSGSGKS. GTP is bound at residue 56–59; that stretch reads DVRN. Residues 266 to 284 form an RNA-binding region; that stretch reads RSRGKNVQSRHRTLEKRKP.

The protein belongs to the RapZ-like family. RapZ subfamily. As to quaternary structure, homotrimer.

Its function is as follows. Modulates the synthesis of GlmS, by affecting the processing and stability of the regulatory small RNA GlmZ. When glucosamine-6-phosphate (GlcN6P) concentrations are high in the cell, RapZ binds GlmZ and targets it to cleavage by RNase E. Consequently, GlmZ is inactivated and unable to activate GlmS synthesis. Under low GlcN6P concentrations, RapZ is sequestered and inactivated by an other regulatory small RNA, GlmY, preventing GlmZ degradation and leading to synthesis of GlmS. In Shigella boydii serotype 18 (strain CDC 3083-94 / BS512), this protein is RNase adapter protein RapZ.